The chain runs to 445 residues: MDLELDEYYNKTLATENNTAATRNSDFPVWDDYKSSVDDLQYFLIGLYTFVSLLGFMGNLLILMALMKKRNQKTTVNFLIGNLAFSDILVVLFCSPFTLTSVLLDQWMFGKVMCHIMPFLQCVSVLVSTLILISIAIVRYHMIKHPISNNLTANHGYFLIATVWTLGFAICSPLPVFHSLVELQETFGSALLSSRYLCVESWPSDSYRIAFTISLLLVQYILPLVCLTVSHTSVCRSISCGLSNKENRLEENEMINLTLHPSKKSGPQVKLSGSHKWSYSFIKKHRRRYSKKTACVLPAPERPSQENHSRILPENFGSVRSQLSSSSKFIPGVPTCFEIKPEENSDVHELRVKRSVTRIKKRSRSVFYRLTILILVFAVSWMPLHLFHVVTDFNDNLISNRHFKLVYCICHLLGMMSCCLNPILYGFLNNGIKADLVSLIHCLHM.

The Extracellular portion of the chain corresponds to 1–42 (MDLELDEYYNKTLATENNTAATRNSDFPVWDDYKSSVDDLQY). 2 N-linked (GlcNAc...) asparagine glycosylation sites follow: Asn-10 and Asn-17. A helical transmembrane segment spans residues 43-63 (FLIGLYTFVSLLGFMGNLLIL). At 64-77 (MALMKKRNQKTTVN) the chain is on the cytoplasmic side. The helical transmembrane segment at 78–98 (FLIGNLAFSDILVVLFCSPFT) threads the bilayer. At 99 to 117 (LTSVLLDQWMFGKVMCHIM) the chain is on the extracellular side. The cysteines at positions 114 and 198 are disulfide-linked. The helical transmembrane segment at 118-138 (PFLQCVSVLVSTLILISIAIV) threads the bilayer. Residues 139-156 (RYHMIKHPISNNLTANHG) lie on the Cytoplasmic side of the membrane. Residues 157–177 (YFLIATVWTLGFAICSPLPVF) form a helical membrane-spanning segment. Residues 178–208 (HSLVELQETFGSALLSSRYLCVESWPSDSYR) lie on the Extracellular side of the membrane. Residues 209-229 (IAFTISLLLVQYILPLVCLTV) form a helical membrane-spanning segment. The Cytoplasmic segment spans residues 230–369 (SHTSVCRSIS…KKRSRSVFYR (140 aa)). A helical transmembrane segment spans residues 370-390 (LTILILVFAVSWMPLHLFHVV). The Extracellular portion of the chain corresponds to 391–407 (TDFNDNLISNRHFKLVY). Residues 408–428 (CICHLLGMMSCCLNPILYGFL) form a helical membrane-spanning segment. The Cytoplasmic portion of the chain corresponds to 429-445 (NNGIKADLVSLIHCLHM). Cys-442 is lipidated: S-palmitoyl cysteine.

It belongs to the G-protein coupled receptor 1 family. In terms of tissue distribution, brain; hypothalamus.

It is found in the cell membrane. Its function is as follows. Receptor for neuropeptide Y and peptide YY. The activity of this receptor is mediated by G proteins that inhibit adenylate cyclase activity. Seems to be associated with food intake. Could be involved in feeding disorders. This chain is Neuropeptide Y receptor type 5 (NPY5R), found in Homo sapiens (Human).